A 323-amino-acid polypeptide reads, in one-letter code: Ribose-phosphate pyrophosphokinase (323 aa).

Residues aspartate 38–glutamate 40 and arginine 96–glutamine 97 each bind ATP. 2 residues coordinate Mg(2+): histidine 130 and aspartate 170. Residue lysine 193 is part of the active site. Residues arginine 195, aspartate 219, and aspartate 223–threonine 227 each bind D-ribose 5-phosphate.

It belongs to the ribose-phosphate pyrophosphokinase family. Class I subfamily. In terms of assembly, homohexamer. It depends on Mg(2+) as a cofactor.

The protein localises to the cytoplasm. It catalyses the reaction D-ribose 5-phosphate + ATP = 5-phospho-alpha-D-ribose 1-diphosphate + AMP + H(+). Its pathway is metabolic intermediate biosynthesis; 5-phospho-alpha-D-ribose 1-diphosphate biosynthesis; 5-phospho-alpha-D-ribose 1-diphosphate from D-ribose 5-phosphate (route I): step 1/1. Its function is as follows. Involved in the biosynthesis of the central metabolite phospho-alpha-D-ribosyl-1-pyrophosphate (PRPP) via the transfer of pyrophosphoryl group from ATP to 1-hydroxyl of ribose-5-phosphate (Rib-5-P). The sequence is that of Ribose-phosphate pyrophosphokinase from Chlorobaculum tepidum (strain ATCC 49652 / DSM 12025 / NBRC 103806 / TLS) (Chlorobium tepidum).